Reading from the N-terminus, the 336-residue chain is Glyceraldehyde-3-phosphate dehydrogenase (336 aa).

NAD(+)-binding positions include 12-13 (RI), aspartate 34, and arginine 79. D-glyceraldehyde 3-phosphate-binding positions include 150–152 (SCT), threonine 181, 210–211 (TG), and arginine 233. Cysteine 151 functions as the Nucleophile in the catalytic mechanism. NAD(+) is bound at residue asparagine 315.

It belongs to the glyceraldehyde-3-phosphate dehydrogenase family. In terms of assembly, homotetramer.

Its subcellular location is the cytoplasm. The catalysed reaction is D-glyceraldehyde 3-phosphate + phosphate + NAD(+) = (2R)-3-phospho-glyceroyl phosphate + NADH + H(+). It participates in carbohydrate degradation; glycolysis; pyruvate from D-glyceraldehyde 3-phosphate: step 1/5. This Aspergillus niger protein is Glyceraldehyde-3-phosphate dehydrogenase (gpdA).